The primary structure comprises 407 residues: Protoasukamycin 4-monooxygenase (407 aa).

Does not interact with AsuE2, suggesting a possible transient interaction between the two enzymes instead of formation of a stable complex. It depends on FMN as a cofactor. Requires FAD as cofactor. Riboflavin serves as cofactor.

The catalysed reaction is protoasukamycin + NADH + O2 + H(+) = 4-hydroxyprotoasukamycin + NAD(+) + H2O. Its pathway is antibiotic biosynthesis. Its activity is regulated as follows. When flavin concentration is low, activity is enhanced by the presence of the NADH-dependent flavin reductase AsuE2. In the presence of abundant flavin, activity of AsuE1 is not affected by AsuE2. Its function is as follows. Involved in the biosynthesis of the antibiotic asukamycin. Catalyzes the conversion of protoasukamycin to 4-hydroxyprotoasukamycin. Can also convert some protoasukamycin derivatives into their corresponding 4-hydroxyprotoasukamycin derivatives. Can also use NADPH, but catalytic efficiency is 50-fold higher with NADH. The sequence is that of Protoasukamycin 4-monooxygenase from Streptomyces nodosus subsp. asukaensis.